The sequence spans 350 residues: Probable dual-specificity RNA methyltransferase RlmN (350 aa).

Residues 105–342 enclose the Radical SAM core domain; sequence ANGKNSVCIS…VRQSKGANIN (238 aa). C112 and C345 form a disulfide bridge. The [4Fe-4S] cluster site is built by C119, C123, and C126. S-adenosyl-L-methionine is bound by residues 166–167, S198, 221–223, and N302; these read GE and SLH. The active-site S-methylcysteine intermediate is the C345.

This sequence belongs to the radical SAM superfamily. RlmN family. It depends on [4Fe-4S] cluster as a cofactor.

It is found in the cytoplasm. It carries out the reaction adenosine(2503) in 23S rRNA + 2 reduced [2Fe-2S]-[ferredoxin] + 2 S-adenosyl-L-methionine = 2-methyladenosine(2503) in 23S rRNA + 5'-deoxyadenosine + L-methionine + 2 oxidized [2Fe-2S]-[ferredoxin] + S-adenosyl-L-homocysteine. The enzyme catalyses adenosine(37) in tRNA + 2 reduced [2Fe-2S]-[ferredoxin] + 2 S-adenosyl-L-methionine = 2-methyladenosine(37) in tRNA + 5'-deoxyadenosine + L-methionine + 2 oxidized [2Fe-2S]-[ferredoxin] + S-adenosyl-L-homocysteine. Specifically methylates position 2 of adenine 2503 in 23S rRNA and position 2 of adenine 37 in tRNAs. This chain is Probable dual-specificity RNA methyltransferase RlmN, found in Endomicrobium trichonymphae.